The chain runs to 314 residues: Probable phytol kinase 1, chloroplastic (314 aa).

The N-terminal 62 residues, 1–62, are a transit peptide targeting the chloroplast; that stretch reads MAAAARPVDV…GVGAAAAPAV (62 aa). A run of 7 helical transmembrane segments spans residues 72–91, 111–131, 135–155, 181–201, 234–254, 266–286, and 294–314; these read AALR…YSLV, IVHV…SNST, FFAA…GLRL, YVIV…IGIV, IGSI…LFYF, LALG…CIPV, and ISVP…SSCC.

It belongs to the polyprenol kinase family.

It localises to the plastid. The protein resides in the chloroplast membrane. The enzyme catalyses phytol + CTP = phytyl phosphate + CDP + H(+). It functions in the pathway cofactor biosynthesis; tocopherol biosynthesis. In terms of biological role, involved in the activation and reutilization of phytol from chlorophyll degradation in plant metabolism, including tocopherol biosynthesis. Catalyzes the conversion of phytol to phytol monophosphate (PMP). The chain is Probable phytol kinase 1, chloroplastic from Oryza sativa subsp. japonica (Rice).